Reading from the N-terminus, the 156-residue chain is Small ribosomal subunit protein uS7 (156 aa).

This sequence belongs to the universal ribosomal protein uS7 family. In terms of assembly, part of the 30S ribosomal subunit. Contacts proteins S9 and S11.

One of the primary rRNA binding proteins, it binds directly to 16S rRNA where it nucleates assembly of the head domain of the 30S subunit. Is located at the subunit interface close to the decoding center, probably blocks exit of the E-site tRNA. The polypeptide is Small ribosomal subunit protein uS7 (Pseudoalteromonas translucida (strain TAC 125)).